The following is a 528-amino-acid chain: Probable cyclic di-GMP phosphodiesterase PdeC (528 aa).

Helical transmembrane passes span glycine 14–alanine 34 and histidine 242–leucine 262. An EAL domain is found at tyrosine 268–proline 520.

It localises to the cell inner membrane. It catalyses the reaction 3',3'-c-di-GMP + H2O = 5'-phosphoguanylyl(3'-&gt;5')guanosine + H(+). Its function is as follows. Phosphodiesterase (PDE) that catalyzes the hydrolysis of cyclic-di-GMP (c-di-GMP) to 5'-pGpG. Cyclic-di-GMP is a second messenger which controls cell surface-associated traits in bacteria. Overexpression reduces biofilm formation. This chain is Probable cyclic di-GMP phosphodiesterase PdeC, found in Escherichia coli (strain K12).